Here is a 437-residue protein sequence, read N- to C-terminus: Phosphomethylpyrimidine synthase (437 aa).

Residues Asn-69, Met-98, Tyr-127, His-163, 185 to 187, 226 to 229, and Glu-265 each bind substrate; these read SRG and DACR. His-269 serves as a coordination point for Zn(2+). Residue Tyr-292 coordinates substrate. His-333 contributes to the Zn(2+) binding site. Positions 409, 412, and 416 each coordinate [4Fe-4S] cluster.

The protein belongs to the ThiC family. Requires [4Fe-4S] cluster as cofactor.

The catalysed reaction is 5-amino-1-(5-phospho-beta-D-ribosyl)imidazole + S-adenosyl-L-methionine = 4-amino-2-methyl-5-(phosphooxymethyl)pyrimidine + CO + 5'-deoxyadenosine + formate + L-methionine + 3 H(+). It functions in the pathway cofactor biosynthesis; thiamine diphosphate biosynthesis. In terms of biological role, catalyzes the synthesis of the hydroxymethylpyrimidine phosphate (HMP-P) moiety of thiamine from aminoimidazole ribotide (AIR) in a radical S-adenosyl-L-methionine (SAM)-dependent reaction. This Clostridium botulinum (strain Kyoto / Type A2) protein is Phosphomethylpyrimidine synthase.